The primary structure comprises 268 residues: Tryptophan synthase alpha chain (268 aa).

Active-site proton acceptor residues include Glu-49 and Asp-60.

Belongs to the TrpA family. As to quaternary structure, tetramer of two alpha and two beta chains.

It carries out the reaction (1S,2R)-1-C-(indol-3-yl)glycerol 3-phosphate + L-serine = D-glyceraldehyde 3-phosphate + L-tryptophan + H2O. Its pathway is amino-acid biosynthesis; L-tryptophan biosynthesis; L-tryptophan from chorismate: step 5/5. In terms of biological role, the alpha subunit is responsible for the aldol cleavage of indoleglycerol phosphate to indole and glyceraldehyde 3-phosphate. In Xanthomonas oryzae pv. oryzae (strain PXO99A), this protein is Tryptophan synthase alpha chain.